An 884-amino-acid chain; its full sequence is E3 ubiquitin-protein ligase BRE1-like 1 (884 aa).

Residues 1–37 (MGSTGEPDRKRRLSSSVAPGGGAPVSPAKRLAVAPTS) are disordered. Residues 49–86 (YKNQKLSEQLEAHKFEYRALENKFAGLKEKQRTHNETL) are a coiled coil. Residues 107-127 (KSGSPNSSPGSGHNNVQKDGT) are disordered. The segment covering 108–121 (SGSPNSSPGSGHNN) has biased composition (low complexity). Coiled coils occupy residues 216 to 541 (LNNV…ELKL), 580 to 663 (SKLE…LQQI), 696 to 762 (RNLQ…QSLD), and 789 to 827 (KKRI…KEYR). The segment at 832–871 (CGICHDRQKEVVITKCYHLFCNQCIQKSLGNRQRRCPSCS) adopts an RING-type zinc-finger fold.

The protein belongs to the BRE1 family.

It is found in the nucleus. It catalyses the reaction S-ubiquitinyl-[E2 ubiquitin-conjugating enzyme]-L-cysteine + [acceptor protein]-L-lysine = [E2 ubiquitin-conjugating enzyme]-L-cysteine + N(6)-ubiquitinyl-[acceptor protein]-L-lysine.. Its pathway is protein modification; protein ubiquitination. Its function is as follows. E3 ubiquitin-protein ligase that monoubiquitinates H2B to form H2BK143ub1. H2BK143ub1 gives a specific tag for epigenetic transcriptional activation and is also prerequisite for H3K4me and maybe H3K79me. It thereby plays a central role in histone code and gene regulation. Forms a ubiquitin ligase complex in cooperation with the E2 enzyme UBC2/RAD6. The polypeptide is E3 ubiquitin-protein ligase BRE1-like 1 (BRE1A) (Oryza sativa subsp. indica (Rice)).